A 271-amino-acid polypeptide reads, in one-letter code: Very long chain fatty acid elongase 3 (271 aa).

Asn6 carries an N-linked (GlcNAc...) asparagine glycan. The next 7 helical transmembrane spans lie at 30-50 (FLEE…LLIV), 67-87 (PLIL…LRMW), 116-136 (FWSF…AFII), 141-161 (PLIF…SFGY), 165-187 (VPSG…TYYT), 199-219 (LPMV…IFGI), and 236-256 (HFFW…HFFH).

The protein belongs to the ELO family. ELOVL3 subfamily. Interacts with TECR. In terms of processing, N-Glycosylated. In terms of tissue distribution, expressed in brown adipose tissue and liver. In the skin, strong expressed in the cells of the inner layer of the outer root sheath of the hair follicles and in the sebocytes of the sebaceous glands. Hardly detectable in the epidermis and not at all in fibroblasts.

Its subcellular location is the endoplasmic reticulum membrane. It carries out the reaction a very-long-chain acyl-CoA + malonyl-CoA + H(+) = a very-long-chain 3-oxoacyl-CoA + CO2 + CoA. It catalyses the reaction eicosanoyl-CoA + malonyl-CoA + H(+) = 3-oxodocosanoyl-CoA + CO2 + CoA. The catalysed reaction is hexadecanoyl-CoA + malonyl-CoA + H(+) = 3-oxooctadecanoyl-CoA + CO2 + CoA. The enzyme catalyses octadecanoyl-CoA + malonyl-CoA + H(+) = 3-oxoeicosanoyl-CoA + CO2 + CoA. It carries out the reaction (9Z)-octadecenoyl-CoA + malonyl-CoA + H(+) = 3-oxo-(11Z)-eicosenoyl-CoA + CO2 + CoA. It catalyses the reaction (9Z,12Z)-octadecadienoyl-CoA + malonyl-CoA + H(+) = (11Z,14Z)-3-oxoicosa-11,14-dienoyl-CoA + CO2 + CoA. The catalysed reaction is (9Z,12Z,15Z)-octadecatrienoyl-CoA + malonyl-CoA + H(+) = (11Z,14Z,17Z)-3-oxoeicosatrienoyl-CoA + CO2 + CoA. The enzyme catalyses docosanoyl-CoA + malonyl-CoA + H(+) = 3-oxotetracosanoyl-CoA + CO2 + CoA. It carries out the reaction tetradecanoyl-CoA + malonyl-CoA + H(+) = 3-oxohexadecanoyl-CoA + CO2 + CoA. It participates in lipid metabolism; polyunsaturated fatty acid biosynthesis. Its function is as follows. Catalyzes the first and rate-limiting reaction of the four reactions that constitute the long-chain fatty acids elongation cycle. This endoplasmic reticulum-bound enzymatic process allows the addition of 2 carbons to the chain of long- and very long-chain fatty acids (VLCFAs) per cycle. Condensing enzyme that exhibits activity toward saturated and unsaturated acyl-CoA substrates with higher activity toward C18 acyl-CoAs, especially C18:0 acyl-CoAs. May participate in the production of saturated and monounsaturated VLCFAs of different chain lengths that are involved in multiple biological processes as precursors of membrane lipids and lipid mediators. Participates in the formation of certain VLCFA and triglycerides in certain cells of the hair follicles and the sebaceous glands, required for skin barrier function. Critical enzyme for lipid accumulation and metabolic activity in brown adipocytes during the early phase of the tissue recruitment. Plays a role in lipid storage and in resistance to diet-induced obesity. This Mus musculus (Mouse) protein is Very long chain fatty acid elongase 3.